A 549-amino-acid chain; its full sequence is Fas-activated serine/threonine kinase (549 aa).

Residues 1–30 form a disordered region; sequence MRRPRGEPGPRAPRPTEGATCAGPGESWSP. Residues 477-535 enclose the RAP domain; sequence VVLVLRERWHFCRDGRVLLGSRALRERHLGLMGYQLLPLPFEELESQRGLPQLKSYLRQ.

This sequence belongs to the FAST protein kinase family. In terms of assembly, interacts with TIA1; the interactions leads to TIA1 phosphorylation. Interacts with TIAR. Autophosphorylated on serine/threonine residues. Activated by dephosphorylation. As to expression, expressed in heart, brain, placenta, lung, liver, skeletal muscle, kidney and pancreas.

It is found in the mitochondrion matrix. It carries out the reaction L-seryl-[Fas-activated protein] + ATP = O-phospho-L-seryl-[Fas-activated protein] + ADP + H(+). The catalysed reaction is L-threonyl-[Fas-activated protein] + ATP = O-phospho-L-threonyl-[Fas-activated protein] + ADP + H(+). It catalyses the reaction L-seryl-[protein] + ATP = O-phospho-L-seryl-[protein] + ADP + H(+). The enzyme catalyses L-threonyl-[protein] + ATP = O-phospho-L-threonyl-[protein] + ADP + H(+). Functionally, phosphorylates the splicing regulator TIA1, thereby promoting the inclusion of FAS exon 6, which leads to an mRNA encoding a pro-apoptotic form of the receptor. In terms of biological role, required for the biogenesis of some mitochondrial-encoded mRNAs, specifically stabilizes ND6 (NADH dehydrogenase complex subunit 6) mRNA, and regulates its levels. This Homo sapiens (Human) protein is Fas-activated serine/threonine kinase (FASTK).